Reading from the N-terminus, the 506-residue chain is Protein MGF 505-4R (506 aa).

This sequence belongs to the asfivirus MGF 505 family.

Functionally, plays a role in virus cell tropism, and may be required for efficient virus replication in macrophages. The chain is Protein MGF 505-4R from Ornithodoros (relapsing fever ticks).